Consider the following 517-residue polypeptide: Bifunctional purine biosynthesis protein PurH (517 aa).

Residues 1 to 146 (MAPIALLSVS…KNHAHVAVLT (146 aa)) enclose the MGS-like domain.

The protein belongs to the PurH family.

It catalyses the reaction (6R)-10-formyltetrahydrofolate + 5-amino-1-(5-phospho-beta-D-ribosyl)imidazole-4-carboxamide = 5-formamido-1-(5-phospho-D-ribosyl)imidazole-4-carboxamide + (6S)-5,6,7,8-tetrahydrofolate. It carries out the reaction IMP + H2O = 5-formamido-1-(5-phospho-D-ribosyl)imidazole-4-carboxamide. It functions in the pathway purine metabolism; IMP biosynthesis via de novo pathway; 5-formamido-1-(5-phospho-D-ribosyl)imidazole-4-carboxamide from 5-amino-1-(5-phospho-D-ribosyl)imidazole-4-carboxamide (10-formyl THF route): step 1/1. The protein operates within purine metabolism; IMP biosynthesis via de novo pathway; IMP from 5-formamido-1-(5-phospho-D-ribosyl)imidazole-4-carboxamide: step 1/1. The protein is Bifunctional purine biosynthesis protein PurH of Prochlorococcus marinus (strain MIT 9313).